Here is a 193-residue protein sequence, read N- to C-terminus: uncharacterized protein (193 aa).

This is an uncharacterized protein from Acidianus convivator (ATV).